A 343-amino-acid chain; its full sequence is ATP-dependent 6-phosphofructokinase (343 aa).

ATP contacts are provided by residues G10, 73-74, and 103-106; these read RV and GEGT. E104 provides a ligand contact to Mg(2+). Substrate is bound by residues 126-128, R163, 170-172, E223, R267, and 273-276; these read TID, MGR, and HIQR. D128 serves as the catalytic Proton acceptor.

The protein belongs to the phosphofructokinase type A (PFKA) family. Mixed-substrate PFK group III subfamily. Homodimer or homotetramer. The cofactor is Mg(2+).

It localises to the cytoplasm. The catalysed reaction is beta-D-fructose 6-phosphate + ATP = beta-D-fructose 1,6-bisphosphate + ADP + H(+). It catalyses the reaction D-tagatofuranose 6-phosphate + ATP = D-tagatofuranose 1,6-bisphosphate + ADP + H(+). It functions in the pathway carbohydrate degradation; glycolysis; D-glyceraldehyde 3-phosphate and glycerone phosphate from D-glucose: step 3/4. In terms of biological role, catalyzes the phosphorylation of D-fructose 6-phosphate to fructose 1,6-bisphosphate by ATP, the first committing step of glycolysis. Can also catalyze the phosphorylation of tagatose-6-phosphate. The polypeptide is ATP-dependent 6-phosphofructokinase (Mycobacterium tuberculosis (strain CDC 1551 / Oshkosh)).